A 250-amino-acid chain; its full sequence is 5'-nucleotidase SurE (250 aa).

Asp8, Asp9, Ser39, and Asn91 together coordinate a divalent metal cation.

The protein belongs to the SurE nucleotidase family. Requires a divalent metal cation as cofactor.

The protein localises to the cytoplasm. It carries out the reaction a ribonucleoside 5'-phosphate + H2O = a ribonucleoside + phosphate. Nucleotidase that shows phosphatase activity on nucleoside 5'-monophosphates. In Shewanella halifaxensis (strain HAW-EB4), this protein is 5'-nucleotidase SurE.